Consider the following 116-residue polypeptide: Neuropeptide Y receptor type 1 (116 aa).

The chain crosses the membrane as a helical span at residues 1–6; the sequence is LVLIAV. Residues 7–24 are Cytoplasmic-facing; that stretch reads ERHQLIINPRGWRPSNRH. Residues 25-45 form a helical membrane-spanning segment; the sequence is AYVGIAVIWVLAVASSLPFLI. At 46 to 81 the chain is on the extracellular side; the sequence is YQVLTDEPFQNVTLDAFKDKYVCFDKFPSDSHRLSY. N-linked (GlcNAc...) asparagine glycosylation is present at Asn-56. The chain crosses the membrane as a helical span at residues 82 to 102; sequence TTLLLVLQYFGPLCFIFICYF. Residues 103–116 lie on the Cytoplasmic side of the membrane; the sequence is KIYIRLKRRNNMMD.

The protein belongs to the G-protein coupled receptor 1 family.

The protein localises to the cell membrane. Functionally, receptor for neuropeptide Y and peptide YY. In Ovis aries (Sheep), this protein is Neuropeptide Y receptor type 1 (NPY1R).